The chain runs to 405 residues: Nicotinate phosphoribosyltransferase (405 aa).

Histidine 230 is modified (phosphohistidine; by autocatalysis).

Belongs to the NAPRTase family. Post-translationally, transiently phosphorylated on a His residue during the reaction cycle. Phosphorylation strongly increases the affinity for substrates and increases the rate of nicotinate D-ribonucleotide production. Dephosphorylation regenerates the low-affinity form of the enzyme, leading to product release.

The enzyme catalyses nicotinate + 5-phospho-alpha-D-ribose 1-diphosphate + ATP + H2O = nicotinate beta-D-ribonucleotide + ADP + phosphate + diphosphate. It functions in the pathway cofactor biosynthesis; NAD(+) biosynthesis; nicotinate D-ribonucleotide from nicotinate: step 1/1. Its function is as follows. Catalyzes the synthesis of beta-nicotinate D-ribonucleotide from nicotinate and 5-phospho-D-ribose 1-phosphate at the expense of ATP. This Bordetella pertussis (strain Tohama I / ATCC BAA-589 / NCTC 13251) protein is Nicotinate phosphoribosyltransferase.